We begin with the raw amino-acid sequence, 87 residues long: U3-theraphotoxin-Hhn1n (87 aa).

The N-terminal stretch at 1–24 (MVNMKASMFLTFAGLVLLFVVCYA) is a signal peptide. Residues 25–52 (SESEEKEFPKEMLSSIFAVDNDFKQEER) constitute a propeptide that is removed on maturation. 3 cysteine pairs are disulfide-bonded: Cys54–Cys67, Cys61–Cys72, and Cys66–Cys79.

Belongs to the neurotoxin 10 (Hwtx-1) family. 51 (Hntx-8) subfamily. Hntx-8 sub-subfamily. In terms of tissue distribution, expressed by the venom gland.

The protein localises to the secreted. Weakly inhibits Kv11.1/KCNH2/ERG1, Kv1.2/KCNA2, Kv1.3/KCNA3, and Kv2.1/KCNB1. This is U3-theraphotoxin-Hhn1n from Cyriopagopus hainanus (Chinese bird spider).